Here is a 429-residue protein sequence, read N- to C-terminus: Bifunctional protein GlmU (429 aa).

Residues 1 to 223 (MKTSILILAA…EDEFMGINDK (223 aa)) are pyrophosphorylase. Residues 8–11 (LAAG), Lys-22, Gln-74, and 81–82 (GT) each bind UDP-N-acetyl-alpha-D-glucosamine. Position 102 (Asp-102) interacts with Mg(2+). Residues Gly-135, Glu-149, Asn-164, and Asn-221 each coordinate UDP-N-acetyl-alpha-D-glucosamine. Asn-221 serves as a coordination point for Mg(2+). The interval 224–244 (FELSIAENFMQEKIKKYWMQQ) is linker. Residues 245-429 (GVIFHLPQST…KNYYYKKFQK (185 aa)) are N-acetyltransferase. Positions 308 and 325 each coordinate UDP-N-acetyl-alpha-D-glucosamine. His-336 (proton acceptor) is an active-site residue. Residues Tyr-339 and Asn-350 each contribute to the UDP-N-acetyl-alpha-D-glucosamine site. Acetyl-CoA contacts are provided by residues 359 to 360 (NY), Ser-378, Ala-396, and Arg-413.

In the N-terminal section; belongs to the N-acetylglucosamine-1-phosphate uridyltransferase family. It in the C-terminal section; belongs to the transferase hexapeptide repeat family. In terms of assembly, homotrimer. Requires Mg(2+) as cofactor.

It is found in the cytoplasm. The enzyme catalyses alpha-D-glucosamine 1-phosphate + acetyl-CoA = N-acetyl-alpha-D-glucosamine 1-phosphate + CoA + H(+). It catalyses the reaction N-acetyl-alpha-D-glucosamine 1-phosphate + UTP + H(+) = UDP-N-acetyl-alpha-D-glucosamine + diphosphate. It participates in nucleotide-sugar biosynthesis; UDP-N-acetyl-alpha-D-glucosamine biosynthesis; N-acetyl-alpha-D-glucosamine 1-phosphate from alpha-D-glucosamine 6-phosphate (route II): step 2/2. It functions in the pathway nucleotide-sugar biosynthesis; UDP-N-acetyl-alpha-D-glucosamine biosynthesis; UDP-N-acetyl-alpha-D-glucosamine from N-acetyl-alpha-D-glucosamine 1-phosphate: step 1/1. Its pathway is bacterial outer membrane biogenesis; LPS lipid A biosynthesis. In terms of biological role, catalyzes the last two sequential reactions in the de novo biosynthetic pathway for UDP-N-acetylglucosamine (UDP-GlcNAc). The C-terminal domain catalyzes the transfer of acetyl group from acetyl coenzyme A to glucosamine-1-phosphate (GlcN-1-P) to produce N-acetylglucosamine-1-phosphate (GlcNAc-1-P), which is converted into UDP-GlcNAc by the transfer of uridine 5-monophosphate (from uridine 5-triphosphate), a reaction catalyzed by the N-terminal domain. The chain is Bifunctional protein GlmU from Campylobacter jejuni subsp. doylei (strain ATCC BAA-1458 / RM4099 / 269.97).